A 154-amino-acid polypeptide reads, in one-letter code: OCIA domain-containing protein 2 (154 aa).

The OCIA domain maps to 1–120; the sequence is MASVSTHGNQ…HSFEDQLRGA (120 aa). Residue Lys-41 is modified to N6-acetyllysine.

Interacts (via OCIA domain) with OCIAD1/ASRIJ and STAT3. Abundant in kidney, liver and brain.

Its subcellular location is the endosome. The protein localises to the mitochondrion. The protein resides in the mitochondrion inner membrane. Functionally, has an essential role in the assembly of mitochondrial respiratory chain complex III. Is also required for STAT3 activation and plays a role in cell migration. This is OCIA domain-containing protein 2 (Ociad2) from Mus musculus (Mouse).